The primary structure comprises 250 residues: Ubiquinone/menaquinone biosynthesis C-methyltransferase UbiE (250 aa).

Residues Thr73, Asp94, 122–123 (NS), and Ser139 each bind S-adenosyl-L-methionine.

It belongs to the class I-like SAM-binding methyltransferase superfamily. MenG/UbiE family.

It catalyses the reaction a 2-demethylmenaquinol + S-adenosyl-L-methionine = a menaquinol + S-adenosyl-L-homocysteine + H(+). The enzyme catalyses a 2-methoxy-6-(all-trans-polyprenyl)benzene-1,4-diol + S-adenosyl-L-methionine = a 5-methoxy-2-methyl-3-(all-trans-polyprenyl)benzene-1,4-diol + S-adenosyl-L-homocysteine + H(+). It functions in the pathway quinol/quinone metabolism; menaquinone biosynthesis; menaquinol from 1,4-dihydroxy-2-naphthoate: step 2/2. The protein operates within cofactor biosynthesis; ubiquinone biosynthesis. In terms of biological role, methyltransferase required for the conversion of demethylmenaquinol (DMKH2) to menaquinol (MKH2) and the conversion of 2-polyprenyl-6-methoxy-1,4-benzoquinol (DDMQH2) to 2-polyprenyl-3-methyl-6-methoxy-1,4-benzoquinol (DMQH2). This Wigglesworthia glossinidia brevipalpis protein is Ubiquinone/menaquinone biosynthesis C-methyltransferase UbiE.